The primary structure comprises 90 residues: Putative Fis-like DNA-binding protein (90 aa).

Residues 66 to 85 (QSRAAALLGIHRATLRKKLK) constitute a DNA-binding region (H-T-H motif).

The protein belongs to the transcriptional regulatory Fis family.

This Xylella fastidiosa (strain Temecula1 / ATCC 700964) protein is Putative Fis-like DNA-binding protein.